The primary structure comprises 367 residues: Histidinol-phosphate aminotransferase (367 aa).

Position 226 is an N6-(pyridoxal phosphate)lysine (Lys-226).

It belongs to the class-II pyridoxal-phosphate-dependent aminotransferase family. Histidinol-phosphate aminotransferase subfamily. In terms of assembly, homodimer. It depends on pyridoxal 5'-phosphate as a cofactor.

The enzyme catalyses L-histidinol phosphate + 2-oxoglutarate = 3-(imidazol-4-yl)-2-oxopropyl phosphate + L-glutamate. Its pathway is amino-acid biosynthesis; L-histidine biosynthesis; L-histidine from 5-phospho-alpha-D-ribose 1-diphosphate: step 7/9. The polypeptide is Histidinol-phosphate aminotransferase (Wolinella succinogenes (strain ATCC 29543 / DSM 1740 / CCUG 13145 / JCM 31913 / LMG 7466 / NCTC 11488 / FDC 602W) (Vibrio succinogenes)).